Consider the following 412-residue polypeptide: MNAEIIAVGTELLLGQIANTNAQFLSEKLASIGINVYYHTVVGDNNKRLQKAIELAEERADMLIFTGGLGPTKDDLTKETIASTLDEELVYDEKALTSISDYFKRTGREFTENNKKQALVLNGSTVFANDHGMAPGMGLNTNGKVYILLPGPPKEMKPMYISYVEPFLCKFTTGENIYSRVLRFFGIGESQLEVKVQDLIDGQTNPTIAPLANDGEVTLRLTAKHHDADEAEKLIQHVEDLILERVGEFFYGYDQDFLHYKAIRLLKEKGLTLACAESLTGGLFGNQVTENAGVSSVFKGGVICYQNDVKQQILHVPEEVLRTDGAVSKQCARYLAENVKKLLKADIGISFTGVAGPDASEHKEPGTVFIGLVIKDEPAVVFSLNLSGSRQQIRERSTKYGFYHLFKKLEEI.

Belongs to the CinA family.

This chain is Putative competence-damage inducible protein, found in Bacillus mycoides (strain KBAB4) (Bacillus weihenstephanensis).